The primary structure comprises 426 residues: CinA-like protein (426 aa).

The protein belongs to the CinA family.

The sequence is that of CinA-like protein from Gloeobacter violaceus (strain ATCC 29082 / PCC 7421).